The following is a 431-amino-acid chain: 3-phosphoshikimate 1-carboxyvinyltransferase (431 aa).

The 3-phosphoshikimate site is built by Lys21, Ser22, and Arg26. Residue Lys21 participates in phosphoenolpyruvate binding. Residues Gly94 and Arg122 each coordinate phosphoenolpyruvate. Ser167, Gln169, Asp315, and Lys342 together coordinate 3-phosphoshikimate. Gln169 contributes to the phosphoenolpyruvate binding site. The active-site Proton acceptor is Asp315. Positions 346 and 388 each coordinate phosphoenolpyruvate.

This sequence belongs to the EPSP synthase family. In terms of assembly, monomer.

It is found in the cytoplasm. It catalyses the reaction 3-phosphoshikimate + phosphoenolpyruvate = 5-O-(1-carboxyvinyl)-3-phosphoshikimate + phosphate. Its pathway is metabolic intermediate biosynthesis; chorismate biosynthesis; chorismate from D-erythrose 4-phosphate and phosphoenolpyruvate: step 6/7. In terms of biological role, catalyzes the transfer of the enolpyruvyl moiety of phosphoenolpyruvate (PEP) to the 5-hydroxyl of shikimate-3-phosphate (S3P) to produce enolpyruvyl shikimate-3-phosphate and inorganic phosphate. This is 3-phosphoshikimate 1-carboxyvinyltransferase from Pelotomaculum thermopropionicum (strain DSM 13744 / JCM 10971 / SI).